A 413-amino-acid polypeptide reads, in one-letter code: Multifunctional CCA protein (413 aa).

Residues G8 and R11 each contribute to the ATP site. Residues G8 and R11 each contribute to the CTP site. Mg(2+)-binding residues include D21 and D23. Residues R91, R143, and R146 each contribute to the ATP site. R91, R143, and R146 together coordinate CTP. The region spanning 232 to 333 (TGVHVMMVID…VRLLERADAL (102 aa)) is the HD domain.

Belongs to the tRNA nucleotidyltransferase/poly(A) polymerase family. Bacterial CCA-adding enzyme type 1 subfamily. Monomer. Can also form homodimers and oligomers. Mg(2+) is required as a cofactor. Requires Ni(2+) as cofactor.

The catalysed reaction is a tRNA precursor + 2 CTP + ATP = a tRNA with a 3' CCA end + 3 diphosphate. The enzyme catalyses a tRNA with a 3' CCA end + 2 CTP + ATP = a tRNA with a 3' CCACCA end + 3 diphosphate. Its function is as follows. Catalyzes the addition and repair of the essential 3'-terminal CCA sequence in tRNAs without using a nucleic acid template. Adds these three nucleotides in the order of C, C, and A to the tRNA nucleotide-73, using CTP and ATP as substrates and producing inorganic pyrophosphate. tRNA 3'-terminal CCA addition is required both for tRNA processing and repair. Also involved in tRNA surveillance by mediating tandem CCA addition to generate a CCACCA at the 3' terminus of unstable tRNAs. While stable tRNAs receive only 3'-terminal CCA, unstable tRNAs are marked with CCACCA and rapidly degraded. The chain is Multifunctional CCA protein from Burkholderia mallei (strain NCTC 10247).